The following is a 572-amino-acid chain: Proline--tRNA ligase (572 aa).

It belongs to the class-II aminoacyl-tRNA synthetase family. ProS type 1 subfamily. Homodimer.

The protein resides in the cytoplasm. The catalysed reaction is tRNA(Pro) + L-proline + ATP = L-prolyl-tRNA(Pro) + AMP + diphosphate. Functionally, catalyzes the attachment of proline to tRNA(Pro) in a two-step reaction: proline is first activated by ATP to form Pro-AMP and then transferred to the acceptor end of tRNA(Pro). As ProRS can inadvertently accommodate and process non-cognate amino acids such as alanine and cysteine, to avoid such errors it has two additional distinct editing activities against alanine. One activity is designated as 'pretransfer' editing and involves the tRNA(Pro)-independent hydrolysis of activated Ala-AMP. The other activity is designated 'posttransfer' editing and involves deacylation of mischarged Ala-tRNA(Pro). The misacylated Cys-tRNA(Pro) is not edited by ProRS. This chain is Proline--tRNA ligase, found in Enterococcus faecalis (strain ATCC 700802 / V583).